The primary structure comprises 122 residues: uncharacterized protein (122 aa).

This is an uncharacterized protein from Aquifex aeolicus (strain VF5).